Here is a 294-residue protein sequence, read N- to C-terminus: Coiled-coil domain-containing protein 69 (294 aa).

The interval 1–43 is disordered; sequence MGCGHSRLSCCKPPKKRRQRPDQPPKPEPQELGPLNGDTATTD. Gly-2 carries the N-myristoyl glycine lipid modification. Over residues 20-29 the composition is skewed to basic and acidic residues; it reads RPDQPPKPEP. The stretch at 47 to 270 forms a coiled coil; the sequence is ASEEAEQHQK…QEKEELLYRV (224 aa). 2 positions are modified to phosphoserine: Ser-152 and Ser-239.

Belongs to the CCDC69 family.

It localises to the cytoplasm. It is found in the cytoskeleton. The protein localises to the spindle. The protein resides in the midbody. May act as a scaffold to regulate the recruitment and assembly of spindle midzone components. Required for the localization of AURKB and PLK1 to the spindle midzone. This chain is Coiled-coil domain-containing protein 69 (CCDC69), found in Bos taurus (Bovine).